The following is a 179-amino-acid chain: Serglycin (179 aa).

A signal peptide spans Met1–Gly26. A propeptide spans Tyr27 to Met75 (activation peptide). An intrachain disulfide couples Cys39 to Cys48. Residues Ser86–Glu145 form a disordered region. 2 O-linked (Xyl...) (glycosaminoglycan) serine glycosylation sites follow: Ser90 and Ser92. 24 repeat units span residues Ser90–Gly91, Ser92–Gly93, Ser94–Gly95, Ser96–Gly97, Ser98–Gly99, Ser100–Gly101, Ser102–Gly103, Ser104–Gly105, Ser106–Gly107, Ser108–Gly109, Ser110–Gly111, Ser112–Gly113, Ser114–Gly115, Ser116–Gly117, Ser118–Gly119, Ser120–Gly121, Ser122–Gly123, Ser124–Gly125, Ser126–Gly127, Ser128–Gly129, Ser130–Gly131, Ser132–Gly133, Ser134–Gly135, and Ser136–Gly137. Positions Ser90–Gly137 are 24 X 2 AA tandem repeats of S-G. The span at Ser92–Ser136 shows a compositional bias: gly residues. O-linked (Xyl...) (glycosaminoglycan) serine glycans are attached at residues Ser96, Ser98, Ser100, Ser102, Ser104, and Ser106.

This sequence belongs to the serglycin family. Binds to activated CD44 and to GZMB. In terms of processing, O-glycosylated; contains chondroitin sulfate and heparan sulfate.

Its subcellular location is the cytoplasmic granule. It is found in the cytolytic granule. The protein resides in the secreted. The protein localises to the extracellular space. It localises to the golgi apparatus. In terms of biological role, plays a role in formation of mast cell secretory granules and mediates storage of various compounds in secretory vesicles. Required for storage of some proteases in both connective tissue and mucosal mast cells and for storage of granzyme B in T-lymphocytes. Plays a role in localizing neutrophil elastase in azurophil granules of neutrophils. Mediates processing of MMP2. Plays a role in cytotoxic cell granule-mediated apoptosis by forming a complex with granzyme B which is delivered to cells by perforin to induce apoptosis. Regulates the secretion of TNF-alpha and may also regulate protease secretion. Inhibits bone mineralization. This Rattus norvegicus (Rat) protein is Serglycin (Srgn).